We begin with the raw amino-acid sequence, 472 residues long: Probable dipeptidase A (472 aa).

The active site involves Cys-10.

The protein belongs to the peptidase C69 family.

The enzyme catalyses an L-aminoacyl-L-amino acid + H2O = 2 an L-alpha-amino acid. The protein is Probable dipeptidase A (pepDA) of Streptococcus pyogenes serotype M1.